A 955-amino-acid polypeptide reads, in one-letter code: 2-oxoglutarate dehydrogenase E1 component (955 aa).

This sequence belongs to the alpha-ketoglutarate dehydrogenase family. Homodimer. Part of the 2-oxoglutarate dehydrogenase (OGDH) complex composed of E1 (2-oxoglutarate dehydrogenase), E2 (dihydrolipoamide succinyltransferase) and E3 (dihydrolipoamide dehydrogenase); the complex contains multiple copies of the three enzymatic components (E1, E2 and E3). The cofactor is thiamine diphosphate.

The catalysed reaction is N(6)-[(R)-lipoyl]-L-lysyl-[protein] + 2-oxoglutarate + H(+) = N(6)-[(R)-S(8)-succinyldihydrolipoyl]-L-lysyl-[protein] + CO2. Its function is as follows. E1 component of the 2-oxoglutarate dehydrogenase (OGDH) complex which catalyzes the decarboxylation of 2-oxoglutarate, the first step in the conversion of 2-oxoglutarate to succinyl-CoA and CO(2). This chain is 2-oxoglutarate dehydrogenase E1 component, found in Bacillus cereus (strain G9842).